The following is a 246-amino-acid chain: NH(3)-dependent NAD(+) synthetase (246 aa).

Residue 29–36 (GLSGGIDS) coordinates ATP. Mg(2+) is bound at residue Asp-35. Position 110 (Arg-110) interacts with deamido-NAD(+). Thr-130 is an ATP binding site. Residue Glu-135 coordinates Mg(2+). ATP is bound by residues Lys-159 and Ser-181.

Belongs to the NAD synthetase family. Homodimer.

The enzyme catalyses deamido-NAD(+) + NH4(+) + ATP = AMP + diphosphate + NAD(+) + H(+). Its pathway is cofactor biosynthesis; NAD(+) biosynthesis; NAD(+) from deamido-NAD(+) (ammonia route): step 1/1. Its function is as follows. Catalyzes the ATP-dependent amidation of deamido-NAD to form NAD. Uses ammonia as a nitrogen source. The polypeptide is NH(3)-dependent NAD(+) synthetase (Campylobacter jejuni subsp. jejuni serotype O:2 (strain ATCC 700819 / NCTC 11168)).